A 138-amino-acid chain; its full sequence is Nucleoside diphosphate kinase (138 aa).

ATP is bound by residues Lys-9, Phe-57, Arg-85, Thr-91, Arg-102, and Asn-112. Residue His-115 is the Pros-phosphohistidine intermediate of the active site.

It belongs to the NDK family. As to quaternary structure, homotetramer. Mg(2+) serves as cofactor.

It localises to the cytoplasm. The catalysed reaction is a 2'-deoxyribonucleoside 5'-diphosphate + ATP = a 2'-deoxyribonucleoside 5'-triphosphate + ADP. The enzyme catalyses a ribonucleoside 5'-diphosphate + ATP = a ribonucleoside 5'-triphosphate + ADP. In terms of biological role, major role in the synthesis of nucleoside triphosphates other than ATP. The ATP gamma phosphate is transferred to the NDP beta phosphate via a ping-pong mechanism, using a phosphorylated active-site intermediate. The chain is Nucleoside diphosphate kinase from Desulfatibacillum aliphaticivorans.